The chain runs to 173 residues: Lens fiber membrane intrinsic protein (173 aa).

Residues M1–S3 are Cytoplasmic-facing. Residues F4–A24 traverse the membrane as a helical segment. Residues T25–A66 lie on the Extracellular side of the membrane. C-linked (Man) tryptophan glycosylation is found at W43 and W61. An N-linked (GlcNAc...) asparagine glycan is attached at N62. The chain crosses the membrane as a helical span at residues F67–A87. The Cytoplasmic portion of the chain corresponds to H88–P98. The helical transmembrane segment at F99–Y119 threads the bilayer. Residues T120–Y140 are Extracellular-facing. The chain crosses the membrane as a helical span at residues I141–Y161. The Cytoplasmic segment spans residues R162–R173. S170 is modified (phosphoserine). Residue T171 is modified to Phosphothreonine.

It belongs to the PMP-22/EMP/MP20 family. As to quaternary structure, seems to be associated with itself or another lens membrane component via disulfide bonds. In terms of tissue distribution, eye lens specific.

The protein resides in the membrane. Its function is as follows. Present in the thicker 16-17 nm junctions of mammalian lens fiber cells, where it may contribute to cell junctional organization. Acts as a receptor for calmodulin. May play an important role in both lens development and cataractogenesis. This is Lens fiber membrane intrinsic protein (LIM2) from Homo sapiens (Human).